We begin with the raw amino-acid sequence, 62 residues long: DNA-directed RNA polymerase subunit Rpo10 (62 aa).

Residues Cys6, Cys9, Cys43, and Cys44 each coordinate Zn(2+).

It belongs to the archaeal Rpo10/eukaryotic RPB10 RNA polymerase subunit family. Part of the RNA polymerase complex. Zn(2+) is required as a cofactor.

Its subcellular location is the cytoplasm. The catalysed reaction is RNA(n) + a ribonucleoside 5'-triphosphate = RNA(n+1) + diphosphate. DNA-dependent RNA polymerase (RNAP) catalyzes the transcription of DNA into RNA using the four ribonucleoside triphosphates as substrates. In Methanospirillum hungatei JF-1 (strain ATCC 27890 / DSM 864 / NBRC 100397 / JF-1), this protein is DNA-directed RNA polymerase subunit Rpo10.